A 580-amino-acid polypeptide reads, in one-letter code: DNA ligase B (580 aa).

Catalysis depends on K135, which acts as the N6-AMP-lysine intermediate.

The protein belongs to the NAD-dependent DNA ligase family. LigB subfamily.

It catalyses the reaction NAD(+) + (deoxyribonucleotide)n-3'-hydroxyl + 5'-phospho-(deoxyribonucleotide)m = (deoxyribonucleotide)n+m + AMP + beta-nicotinamide D-nucleotide.. Functionally, catalyzes the formation of phosphodiester linkages between 5'-phosphoryl and 3'-hydroxyl groups in double-stranded DNA using NAD as a coenzyme and as the energy source for the reaction. This Photorhabdus laumondii subsp. laumondii (strain DSM 15139 / CIP 105565 / TT01) (Photorhabdus luminescens subsp. laumondii) protein is DNA ligase B.